The primary structure comprises 579 residues: Zinc finger protein 382 (579 aa).

Residues 1–12 (MGRPGRKPRGRA) are compositionally biased toward basic residues. Residues 1 to 37 (MGRPGRKPRGRARPGLFPFPKEELRQGGSSPANLNAM) are disordered. The mediates interaction with TRIM28 stretch occupies residues 12–135 (ARPGLFPFPK…DKPPKSIVII (124 aa)). Residues 27-36 (GGSSPANLNA) show a composition bias toward polar residues. Represses transcription regions lie at residues 40-81 (GPVS…FISV) and 105-240 (IFPS…PEQR). The 72-residue stretch at 42 to 113 (VSFKDVTVDF…RIFPSQSYLE (72 aa)) folds into the KRAB domain. Residues 241-263 (FEYNKCDSSFLMTGVEFPHGRAH) form a C2H2-type 1; degenerate zinc finger. 9 C2H2-type zinc fingers span residues 325–347 (FQCP…ERIH), 353–375 (YICC…EKTH), 381–403 (YLCV…HKAH), 409–431 (YECT…QRTH), 437–459 (YQCT…QRTH), 465–487 (YICS…QRIH), 493–515 (YICS…YRIH), 521–543 (NGCP…QKIH), and 549–571 (YECQ…QKTH). The interval 325-579 (FQCPYCGNSF…THKTETMRFQ (255 aa)) is required for transcriptional repression activity; probably mediates sequence-specific DNA-binding.

The protein belongs to the krueppel C2H2-type zinc-finger protein family. As to quaternary structure, interacts with TRIM28; enhances the transcriptional repressor activity.

It localises to the nucleus. Functions as a sequence-specific transcriptional repressor. The chain is Zinc finger protein 382 (Znf382) from Mus musculus (Mouse).